The sequence spans 124 residues: Protein YobA (124 aa).

A signal peptide spans 1–26 (MASTARSLRYALAILTTSLVTPSVWA). Cu cation-binding residues include H27 and H113.

It belongs to the CopC family.

The protein localises to the periplasm. The polypeptide is Protein YobA (yobA) (Escherichia coli O6:H1 (strain CFT073 / ATCC 700928 / UPEC)).